The primary structure comprises 393 residues: Mitogen-activated protein kinase homolog NTF4 (393 aa).

Positions 1–32 (MDGPAHQTDTVMSDAAGQQPAPPSQPVAGIDN) are disordered. The Protein kinase domain maps to 60 to 345 (KPPIMPIGKG…VEDALAHPYL (286 aa)). ATP contacts are provided by residues 66–74 (IGKGAYGIV) and lysine 89. Residue aspartate 186 is the Proton acceptor of the active site. Residue threonine 218 is modified to Phosphothreonine. The TXY signature appears at 218 to 220 (TEY). Tyrosine 220 carries the phosphotyrosine modification.

It belongs to the protein kinase superfamily. CMGC Ser/Thr protein kinase family. MAP kinase subfamily. Mg(2+) is required as a cofactor. Dually phosphorylated on Thr-218 and Tyr-220, which activates the enzyme. Very low autophosphorylation, although dramatically increased when Mn(2+) is added to the reaction instead of Mg(2+).

The catalysed reaction is L-seryl-[protein] + ATP = O-phospho-L-seryl-[protein] + ADP + H(+). It carries out the reaction L-threonyl-[protein] + ATP = O-phospho-L-threonyl-[protein] + ADP + H(+). Activated by tyrosine and threonine phosphorylation. This chain is Mitogen-activated protein kinase homolog NTF4 (NTF4), found in Nicotiana tabacum (Common tobacco).